The chain runs to 567 residues: Type 2 DNA topoisomerase 6 subunit B (567 aa).

ATP-binding positions include N46, D78, 99–100 (TK), 109–116 (GQQGIGIS), and K472.

It belongs to the TOP6B family. Homodimer. Heterotetramer of two Top6A and two Top6B chains.

It carries out the reaction ATP-dependent breakage, passage and rejoining of double-stranded DNA.. Relaxes both positive and negative superturns and exhibits a strong decatenase activity. The sequence is that of Type 2 DNA topoisomerase 6 subunit B from Thermococcus kodakarensis (strain ATCC BAA-918 / JCM 12380 / KOD1) (Pyrococcus kodakaraensis (strain KOD1)).